The following is a 357-amino-acid chain: Large ribosomal subunit protein mL45 (357 aa).

Positions 333-357 (EAKALPLRTTEKLEEAKKEKEQQEI) are disordered. Residues 341–357 (TTEKLEEAKKEKEQQEI) are compositionally biased toward basic and acidic residues.

It belongs to the mitochondrion-specific ribosomal protein mL45 family.

Its subcellular location is the mitochondrion. This Caenorhabditis elegans protein is Large ribosomal subunit protein mL45 (mrpl-45).